The chain runs to 160 residues: UPF0178 protein XC_1827 (160 aa).

This sequence belongs to the UPF0178 family.

This Xanthomonas campestris pv. campestris (strain 8004) protein is UPF0178 protein XC_1827.